The chain runs to 190 residues: Potassium-transporting ATPase KdpC subunit (190 aa).

A helical membrane pass occupies residues 13-33; that stretch reads VGFLLLTLMCGVVYPGIVTIF.

This sequence belongs to the KdpC family. The system is composed of three essential subunits: KdpA, KdpB and KdpC.

Its subcellular location is the cell membrane. Functionally, part of the high-affinity ATP-driven potassium transport (or Kdp) system, which catalyzes the hydrolysis of ATP coupled with the electrogenic transport of potassium into the cytoplasm. This subunit acts as a catalytic chaperone that increases the ATP-binding affinity of the ATP-hydrolyzing subunit KdpB by the formation of a transient KdpB/KdpC/ATP ternary complex. This chain is Potassium-transporting ATPase KdpC subunit, found in Listeria monocytogenes serotype 4b (strain CLIP80459).